The following is a 432-amino-acid chain: Ornithine decarboxylase, chloroplastic (432 aa).

K95 carries the post-translational modification N6-(pyridoxal phosphate)lysine. Residues S227, G265, and 298 to 301 each bind pyridoxal 5'-phosphate; that span reads EPGR. Position 341 to 342 (341 to 342) interacts with substrate; it reads YD. The active-site Proton donor; shared with dimeric partner is C377. D378 provides a ligand contact to substrate. Y406 is a binding site for pyridoxal 5'-phosphate.

Belongs to the Orn/Lys/Arg decarboxylase class-II family. Homodimer. Only the dimer is catalytically active, as the active sites are constructed of residues from both monomers. Pyridoxal 5'-phosphate serves as cofactor.

The protein resides in the plastid. It localises to the chloroplast. The catalysed reaction is L-lysine + H(+) = cadaverine + CO2. The enzyme catalyses L-ornithine + H(+) = putrescine + CO2. Its pathway is alkaloid biosynthesis; nicotine biosynthesis. It participates in amine and polyamine biosynthesis; putrescine biosynthesis via L-ornithine pathway; putrescine from L-ornithine: step 1/1. With respect to regulation, repressed by alpha-difluoromethylornithine (DFMO), 5,5'-dithiobis-(2-nitrobenzoic acid) (DTNB) and salicylaldehyde. In terms of biological role, involved in the biosynthesis of pyridine alkaloid natural products, leading mainly to the production of anabasine, anatabine, nicotine and nornicotine, effective deterrents against herbivores with antiparasitic and pesticide properties (neurotoxins); nornicotine serves as the precursor in the synthesis of the carcinogen compound N'-nitrosonornicotine (NNN). Catalyzes the first and rate-limiting step of polyamine biosynthesis that converts ornithine into putrescine, which is the precursor for the polyamines, spermidine and spermine. Can also use, with a lower efficiency, L-lysine as substrate to produce cadaverine. Polyamines are essential for cell proliferation and are implicated in cellular processes, ranging from DNA replication to apoptosis. The chain is Ornithine decarboxylase, chloroplastic from Nicotiana glutinosa (Tobacco).